Consider the following 324-residue polypeptide: PDZ domain-containing protein MAGIX (324 aa).

Positions 1 to 26 are disordered; the sequence is MDSRAGNTADPRGGRRGGGLQGSRSP. The PDZ domain maps to 128–212; that stretch reads SVELTRGPAG…HLCLVLQRPQ (85 aa). Positions 216–241 are enriched in basic and acidic residues; sequence GSRIKEVGGHRKTDRSLDPRGSRVES. Residues 216–263 form a disordered region; sequence GSRIKEVGGHRKTDRSLDPRGSRVESRSTISPVHHRPKTRTSPRPSPE. Residue S261 is modified to Phosphoserine.

This is PDZ domain-containing protein MAGIX (Magix) from Mus musculus (Mouse).